Reading from the N-terminus, the 161-residue chain is Regulator of ribonuclease activity A (161 aa).

Belongs to the RraA family. In terms of assembly, homotrimer. Binds to both RNA-binding sites in the C-terminal region of Rne and to RhlB.

It localises to the cytoplasm. Its function is as follows. Globally modulates RNA abundance by binding to RNase E (Rne) and regulating its endonucleolytic activity. Can modulate Rne action in a substrate-dependent manner by altering the composition of the degradosome. Modulates RNA-binding and helicase activities of the degradosome. The chain is Regulator of ribonuclease activity A from Enterobacter sp. (strain 638).